A 424-amino-acid chain; its full sequence is Histidine--tRNA ligase (424 aa).

Belongs to the class-II aminoacyl-tRNA synthetase family. In terms of assembly, homodimer.

Its subcellular location is the cytoplasm. The enzyme catalyses tRNA(His) + L-histidine + ATP = L-histidyl-tRNA(His) + AMP + diphosphate + H(+). This is Histidine--tRNA ligase from Shigella dysenteriae serotype 1 (strain Sd197).